The chain runs to 796 residues: Endonuclease MutS2 (796 aa).

Gly-339 to Thr-346 serves as a coordination point for ATP. The disordered stretch occupies residues Glu-620–Asp-644. The region spanning Leu-721 to Lys-796 is the Smr domain.

It belongs to the DNA mismatch repair MutS family. MutS2 subfamily. As to quaternary structure, homodimer. Binds to stalled ribosomes, contacting rRNA.

In terms of biological role, endonuclease that is involved in the suppression of homologous recombination and thus may have a key role in the control of bacterial genetic diversity. Functionally, acts as a ribosome collision sensor, splitting the ribosome into its 2 subunits. Detects stalled/collided 70S ribosomes which it binds and splits by an ATP-hydrolysis driven conformational change. Acts upstream of the ribosome quality control system (RQC), a ribosome-associated complex that mediates the extraction of incompletely synthesized nascent chains from stalled ribosomes and their subsequent degradation. Probably generates substrates for RQC. The sequence is that of Endonuclease MutS2 from Lachnoclostridium phytofermentans (strain ATCC 700394 / DSM 18823 / ISDg) (Clostridium phytofermentans).